The sequence spans 34 residues: Photosystem II reaction center protein M (34 aa).

A helical transmembrane segment spans residues 5 to 25 (ILAFIATALFILIPTAFLLII).

The protein belongs to the PsbM family. As to quaternary structure, PSII is composed of 1 copy each of membrane proteins PsbA, PsbB, PsbC, PsbD, PsbE, PsbF, PsbH, PsbI, PsbJ, PsbK, PsbL, PsbM, PsbT, PsbX, PsbY, PsbZ, Psb30/Ycf12, at least 3 peripheral proteins of the oxygen-evolving complex and a large number of cofactors. It forms dimeric complexes.

It localises to the plastid. The protein localises to the chloroplast thylakoid membrane. Its function is as follows. One of the components of the core complex of photosystem II (PSII). PSII is a light-driven water:plastoquinone oxidoreductase that uses light energy to abstract electrons from H(2)O, generating O(2) and a proton gradient subsequently used for ATP formation. It consists of a core antenna complex that captures photons, and an electron transfer chain that converts photonic excitation into a charge separation. This subunit is found at the monomer-monomer interface. The polypeptide is Photosystem II reaction center protein M (Agrostis stolonifera (Creeping bentgrass)).